The primary structure comprises 215 residues: 3-dehydroquinate dehydratase (215 aa).

Residues 27–29 (EVR) and Arg-54 contribute to the 3-dehydroquinate site. His-112 functions as the Proton donor/acceptor in the catalytic mechanism. Catalysis depends on Lys-139, which acts as the Schiff-base intermediate with substrate. 3-dehydroquinate-binding residues include Arg-176 and Gln-198.

It belongs to the type-I 3-dehydroquinase family. In terms of assembly, homodimer.

The enzyme catalyses 3-dehydroquinate = 3-dehydroshikimate + H2O. It functions in the pathway metabolic intermediate biosynthesis; chorismate biosynthesis; chorismate from D-erythrose 4-phosphate and phosphoenolpyruvate: step 3/7. In terms of biological role, involved in the third step of the chorismate pathway, which leads to the biosynthesis of aromatic amino acids. Catalyzes the cis-dehydration of 3-dehydroquinate (DHQ) and introduces the first double bond of the aromatic ring to yield 3-dehydroshikimate. In Thermococcus onnurineus (strain NA1), this protein is 3-dehydroquinate dehydratase.